A 243-amino-acid chain; its full sequence is Adenosine 5'-phosphosulfate reductase (243 aa).

It belongs to the PAPS reductase family. CysH subfamily. The cofactor is [4Fe-4S] cluster.

It is found in the cytoplasm. It catalyses the reaction [thioredoxin]-disulfide + sulfite + AMP + 2 H(+) = adenosine 5'-phosphosulfate + [thioredoxin]-dithiol. Its pathway is sulfur metabolism; hydrogen sulfide biosynthesis; sulfite from sulfate. Functionally, catalyzes the formation of sulfite from adenosine 5'-phosphosulfate (APS) using thioredoxin as an electron donor. The protein is Adenosine 5'-phosphosulfate reductase of Staphylococcus haemolyticus (strain JCSC1435).